The following is a 553-amino-acid chain: Arginine--tRNA ligase (553 aa).

The short motif at alanine 122–histidine 132 is the 'HIGH' region element.

This sequence belongs to the class-I aminoacyl-tRNA synthetase family. As to quaternary structure, monomer.

It localises to the cytoplasm. The catalysed reaction is tRNA(Arg) + L-arginine + ATP = L-arginyl-tRNA(Arg) + AMP + diphosphate. This is Arginine--tRNA ligase from Mesoplasma florum (strain ATCC 33453 / NBRC 100688 / NCTC 11704 / L1) (Acholeplasma florum).